A 216-amino-acid chain; its full sequence is V-type ATP synthase subunit D (216 aa).

It belongs to the V-ATPase D subunit family.

Produces ATP from ADP in the presence of a proton gradient across the membrane. This chain is V-type ATP synthase subunit D, found in Clostridium botulinum (strain ATCC 19397 / Type A).